A 193-amino-acid polypeptide reads, in one-letter code: Putative nucleotidase YqfW (193 aa).

Belongs to the 5'(3')-deoxyribonucleotidase family.

This is Putative nucleotidase YqfW (yqfW) from Bacillus subtilis (strain 168).